The chain runs to 449 residues: Nucleoporin NUP42 (449 aa).

Residues 1–25 (MAICSFFLQGRCRYGEKCWNEHPRG) form a C3H1-type zinc finger. 2 disordered regions span residues 22 to 84 (HPRG…GFDN) and 218 to 237 (DMTSGYNGQQKPAFGSSSFP). Polar residues-rich tracts occupy residues 47–83 (WGSSSQRYVQPSSFSRSTTWVNRDNEKPSSGSHSGFD) and 218–227 (DMTSGYNGQQ). FG repeat units lie at residues 231–232 (FG), 274–275 (FG), 284–285 (FG), 305–306 (FG), 314–315 (FG), 335–336 (FG), and 347–348 (FG).

Probable component of the nuclear pore complex (NPC).

Its subcellular location is the nucleus. The protein resides in the nuclear pore complex. The protein localises to the nucleus membrane. Its function is as follows. Required for the export of mRNAs containing poly(A) tails from the nucleus into the cytoplasm. The polypeptide is Nucleoporin NUP42 (nup42) (Xenopus tropicalis (Western clawed frog)).